The following is a 184-amino-acid chain: Protein GrpE (184 aa).

Belongs to the GrpE family. Homodimer.

It localises to the cytoplasm. Participates actively in the response to hyperosmotic and heat shock by preventing the aggregation of stress-denatured proteins, in association with DnaK and GrpE. It is the nucleotide exchange factor for DnaK and may function as a thermosensor. Unfolded proteins bind initially to DnaJ; upon interaction with the DnaJ-bound protein, DnaK hydrolyzes its bound ATP, resulting in the formation of a stable complex. GrpE releases ADP from DnaK; ATP binding to DnaK triggers the release of the substrate protein, thus completing the reaction cycle. Several rounds of ATP-dependent interactions between DnaJ, DnaK and GrpE are required for fully efficient folding. This is Protein GrpE from Pseudomonas putida (strain GB-1).